We begin with the raw amino-acid sequence, 504 residues long: MNVKPEEITSIIKSQIEKYEKKIETVDSGTIIQIGDGIARVYGLNGCMAGELLEFPNDVYAMALNLEQDNVGCVLLGSQEGIKEGNTVKRTGKVVEVPVGENIIGRVVNSLGHPIDGKGAISTTETRAVELVAPGVITRQAVKQPLQTGIKAIDAMIPIGRGQRELIIGDRQTGKTAIAMDTIINQKGKDVICIYVAIGQKQSTVAHIVNNLIETNAMDYTIVVSAAASESAPLQYIAPYAGCSMGEYFMNKGKDVLIVYDDLSKHAVAYRAMSLLLRRPPGREAYPGDVFYLHSRLLERAAKLSDKLGGGSLTALPIIETLAGDVTAYIPTNVISITDGQIFLETELFYSGQRPAINAGISVSRVGGNAQIKAMKQVAGTLRIDLAQYRELASFAQFGSDLDKESKRTLEKGKRLTEILKQPQYKPMAVEKQVMILFAASRNYIMDIPVERISEFEEEFLDYMDTHHREIGDEIKEKQVISDELSDKLRNAIEEFKKIFLIEG.

169–176 (GDRQTGKT) contacts ATP.

The protein belongs to the ATPase alpha/beta chains family. In terms of assembly, F-type ATPases have 2 components, CF(1) - the catalytic core - and CF(0) - the membrane proton channel. CF(1) has five subunits: alpha(3), beta(3), gamma(1), delta(1), epsilon(1). CF(0) has three main subunits: a(1), b(2) and c(9-12). The alpha and beta chains form an alternating ring which encloses part of the gamma chain. CF(1) is attached to CF(0) by a central stalk formed by the gamma and epsilon chains, while a peripheral stalk is formed by the delta and b chains.

It localises to the cell membrane. The catalysed reaction is ATP + H2O + 4 H(+)(in) = ADP + phosphate + 5 H(+)(out). Produces ATP from ADP in the presence of a proton gradient across the membrane. The alpha chain is a regulatory subunit. In Clostridium kluyveri (strain NBRC 12016), this protein is ATP synthase subunit alpha.